A 394-amino-acid polypeptide reads, in one-letter code: NAD(P)H-quinone oxidoreductase subunit H (394 aa).

The protein belongs to the complex I 49 kDa subunit family. In terms of assembly, NDH-1 can be composed of about 15 different subunits; different subcomplexes with different compositions have been identified which probably have different functions.

It localises to the cellular thylakoid membrane. The enzyme catalyses a plastoquinone + NADH + (n+1) H(+)(in) = a plastoquinol + NAD(+) + n H(+)(out). It carries out the reaction a plastoquinone + NADPH + (n+1) H(+)(in) = a plastoquinol + NADP(+) + n H(+)(out). In terms of biological role, NDH-1 shuttles electrons from an unknown electron donor, via FMN and iron-sulfur (Fe-S) centers, to quinones in the respiratory and/or the photosynthetic chain. The immediate electron acceptor for the enzyme in this species is believed to be plastoquinone. Couples the redox reaction to proton translocation, and thus conserves the redox energy in a proton gradient. Cyanobacterial NDH-1 also plays a role in inorganic carbon-concentration. This chain is NAD(P)H-quinone oxidoreductase subunit H, found in Parasynechococcus marenigrum (strain WH8102).